The following is a 265-amino-acid chain: Probable esterase tazC (265 aa).

Catalysis depends on charge relay system residues serine 119, aspartate 209, and histidine 236.

It belongs to the LovG family.

The protein operates within secondary metabolite biosynthesis. Its function is as follows. Probable esterase; part of the gene cluster that mediates the biosynthesis of azaterrilone A and other azaphilones, a class of fungal metabolites characterized by a highly oxygenated pyrano-quinone bicyclic core and exhibiting a broad range of bioactivities. The first step of the pathway begins with the non-reducing polyketide synthase tazA that assembles one acetyl-CoA starter unit, five malonyl-CoA units, and catalyzes a series of Claisen condensations, methylation, PT-mediated cyclization, and finally releases the first hexaketide precursor through the R-domain. The tazA product then undergoes reduction on its terminal ketone and the following pyran-ring formation by yet undetermined enzyme(s). Dehydration and enoyl reduction, possibly involving the trans-enoyl reductase tazE leads to the next intermediate. TazD is predicted as an acetyltransferase and might catalyze the acetylation steps leading to the synthesis of azaterrilone A. Azaterrilone A is not the final product of the taz pathway and both the highly reducing polyketide synthase tazB and the dual enzyme tazHJ catalyze late steps of the pathway, leading to the production of the 2 final stereoisomers that contain additional polyketide modification whose structures have still to be determined. This Aspergillus terreus (strain NIH 2624 / FGSC A1156) protein is Probable esterase tazC.